The sequence spans 247 residues: MASQSPDEAAEAQVSDELECKICYNRYNLKQRKPKVLECCHRVCAKCLYKIIDFGDSPQGVIVCPFCRFETCLPDEEVSSLPDDSNILVNLTCGGKGKKGLPENPTELLLTPKRLASLVSPSHTSSNCLVITIMEVQRESSPSLSSTPVVEFYRPASFDSVTTVSHNWTVWKCTSLLFQTSIRVLVWLLGLLYFSSLPLGIYLLVSKKVTLGVVFVSLVPSSLVILMVYGFCQCVCHEFLDCVAPSS.

The segment at 20-68 (CKICYNRYNLKQRKPKVLECCHRVCAKCLYKIIDFGDSPQGVIVCPFCR) adopts an RING-type zinc-finger fold. A run of 2 helical transmembrane segments spans residues 184–204 (VLVWLLGLLYFSSLPLGIYLL) and 211–231 (LGVVFVSLVPSSLVILMVYGF).

In terms of assembly, interacts with ATP6V0C.

The protein localises to the membrane. The protein resides in the cytoplasm. It carries out the reaction S-ubiquitinyl-[E2 ubiquitin-conjugating enzyme]-L-cysteine + [acceptor protein]-L-lysine = [E2 ubiquitin-conjugating enzyme]-L-cysteine + N(6)-ubiquitinyl-[acceptor protein]-L-lysine.. Its pathway is protein modification; protein ubiquitination. E3 ubiquitin-protein ligase that mediates the ubiquitination of ATP6V0C and targets it to degradation via the ubiquitin-proteasome pathway. Also plays a role in the inhibition of TLR-triggered innate immune response by mediating 'Lys'-48-linked ubiquitination and subsequent degradation of NF-kappa-B component RELA. The protein is E3 ubiquitin-protein ligase RNF182 (RNF182) of Ailuropoda melanoleuca (Giant panda).